Here is a 138-residue protein sequence, read N- to C-terminus: uncharacterized protein (138 aa).

The first 37 residues, M1 to A37, serve as a signal peptide directing secretion.

The protein to H.influenzae HI_1631.

This is an uncharacterized protein from Sinorhizobium fredii (strain NBRC 101917 / NGR234).